We begin with the raw amino-acid sequence, 262 residues long: Phosphatase SCO2771 (262 aa).

In terms of biological role, displays phosphatase activity against p-nitrophenyl phosphate (pNPP) in vitro; however, the physiological substrate is unknown. The polypeptide is Phosphatase SCO2771 (Streptomyces coelicolor (strain ATCC BAA-471 / A3(2) / M145)).